The primary structure comprises 769 residues: Dolichyl-phosphate-mannose--protein mannosyltransferase 2 (769 aa).

A disordered region spans residues 1–44 (MSTSVEPNETEALLRKQNDLSTTASIEEKYPHQQGEAAEDDDDT). Asn8 carries N-linked (GlcNAc...) asparagine glycosylation. The helical transmembrane segment at 59-79 (SLKQVESILAPIVFTALSFFV) threads the bilayer. The N-linked (GlcNAc...) asparagine glycan is linked to Asn132. The next 3 membrane-spanning stretches (helical) occupy residues 152 to 169 (MRLFNATFSALCVPLAYF), 176 to 194 (FSMFTTWLFTLMVALESSY), and 200 to 218 (FILLDSMLLFFTVATVFCF). An N-linked (GlcNAc...) asparagine glycan is attached at Asn226. 2 consecutive transmembrane segments (helical) span residues 252-272 (VKMVGLFVTTLVGIYTVVDLW) and 288-308 (HWFARIVALILVPIFIFMLSF). Asn324 is a glycosylation site (N-linked (GlcNAc...) asparagine). Residues 342–397 (PREVSMFHSVITLKNQGLSGGLLHSHVQTFPEGSKQQQVTTYGHKDSNNNWIFQRA) enclose the MIR 1 domain. N-linked (GlcNAc...) asparagine glycosylation is found at Asn408, Asn453, and Asn462. MIR domains are found at residues 412-468 (IEYI…VEIM) and 474-534 (EDKM…IENN). Transmembrane regions (helical) follow at residues 615–635 (TTWTSTVGVILFAFIVLYYLI), 655–675 (FLMGGIYPMFGWGLHFLPFAI), 679–699 (VTYVHHYVPALYFAMLVFCYE), and 718–738 (LLYLAIYIGLLSLVAGTFWYF).

Belongs to the glycosyltransferase 39 family. As to quaternary structure, PMT1 and PMT2 form a functional heterodimer.

The protein localises to the endoplasmic reticulum membrane. The catalysed reaction is a di-trans,poly-cis-dolichyl beta-D-mannosyl phosphate + L-seryl-[protein] = 3-O-(alpha-D-mannosyl)-L-seryl-[protein] + a di-trans,poly-cis-dolichyl phosphate + H(+). It catalyses the reaction a di-trans,poly-cis-dolichyl beta-D-mannosyl phosphate + L-threonyl-[protein] = 3-O-(alpha-D-mannosyl)-L-threonyl-[protein] + a di-trans,poly-cis-dolichyl phosphate + H(+). It participates in protein modification; protein glycosylation. Functionally, protein mannosyltransferase (PMT) involved in hyphal growth and drug sensitivity. Transfers mannose from Dol-P-mannose to Ser or Thr residues on proteins. PMT1, PMT2 and PMT4 account for most of the protein-O-glycosylation activity, while PMT5 and PMT6 may specifically modulate a much narrower spectrum of target proteins. Essential protein that plays an important role in virulence. This chain is Dolichyl-phosphate-mannose--protein mannosyltransferase 2, found in Candida albicans (strain SC5314 / ATCC MYA-2876) (Yeast).